Reading from the N-terminus, the 451-residue chain is Tubulin alpha chain (451 aa).

A GTP-binding site is contributed by Gln11. Lys40 carries the N6-acetyllysine modification. 6 residues coordinate GTP: Glu71, Gly144, Thr145, Thr179, Asn206, and Asn228. Glu71 serves as a coordination point for Mg(2+). Glu254 is an active-site residue.

This sequence belongs to the tubulin family. Dimer of alpha and beta chains. A typical microtubule is a hollow water-filled tube with an outer diameter of 25 nm and an inner diameter of 15 nM. Alpha-beta heterodimers associate head-to-tail to form protofilaments running lengthwise along the microtubule wall with the beta-tubulin subunit facing the microtubule plus end conferring a structural polarity. Microtubules usually have 13 protofilaments but different protofilament numbers can be found in some organisms and specialized cells. The cofactor is Mg(2+). Post-translationally, undergoes a tyrosination/detyrosination cycle, the cyclic removal and re-addition of a C-terminal tyrosine residue by the enzymes tubulin tyrosine carboxypeptidase (TTCP) and tubulin tyrosine ligase (TTL), respectively. Acetylation of alpha chains at Lys-40 stabilizes microtubules and affects affinity and processivity of microtubule motors. This modification has a role in multiple cellular functions, ranging from cell motility, cell cycle progression or cell differentiation to intracellular trafficking and signaling.

Its subcellular location is the cytoplasm. The protein localises to the cytoskeleton. It carries out the reaction GTP + H2O = GDP + phosphate + H(+). Tubulin is the major constituent of microtubules, a cylinder consisting of laterally associated linear protofilaments composed of alpha- and beta-tubulin heterodimers. Microtubules grow by the addition of GTP-tubulin dimers to the microtubule end, where a stabilizing cap forms. Below the cap, tubulin dimers are in GDP-bound state, owing to GTPase activity of alpha-tubulin. This Triticum aestivum (Wheat) protein is Tubulin alpha chain (TUBA).